We begin with the raw amino-acid sequence, 519 residues long: 2,3-bisphosphoglycerate-independent phosphoglycerate mutase (519 aa).

Mn(2+)-binding residues include aspartate 18 and serine 68. The active-site Phosphoserine intermediate is serine 68. Residues histidine 129, 159–160, arginine 191, arginine 197, 267–270, and lysine 341 contribute to the substrate site; these read RD and RADR. Mn(2+)-binding residues include aspartate 408, histidine 412, aspartate 449, histidine 450, and histidine 468.

It belongs to the BPG-independent phosphoglycerate mutase family. In terms of assembly, monomer. Requires Mn(2+) as cofactor.

The catalysed reaction is (2R)-2-phosphoglycerate = (2R)-3-phosphoglycerate. Its pathway is carbohydrate degradation; glycolysis; pyruvate from D-glyceraldehyde 3-phosphate: step 3/5. Functionally, catalyzes the interconversion of 2-phosphoglycerate and 3-phosphoglycerate. This chain is 2,3-bisphosphoglycerate-independent phosphoglycerate mutase, found in Coxiella burnetii (strain Dugway 5J108-111).